The chain runs to 319 residues: Beta-ketoacyl-[acyl-carrier-protein] synthase III (319 aa).

Catalysis depends on residues cysteine 110 and histidine 246. Positions 247 to 251 are ACP-binding; the sequence is QANYR. Asparagine 276 is an active-site residue.

Belongs to the thiolase-like superfamily. FabH family. In terms of assembly, homodimer.

It localises to the cytoplasm. The enzyme catalyses malonyl-[ACP] + acetyl-CoA + H(+) = 3-oxobutanoyl-[ACP] + CO2 + CoA. It functions in the pathway lipid metabolism; fatty acid biosynthesis. Functionally, catalyzes the condensation reaction of fatty acid synthesis by the addition to an acyl acceptor of two carbons from malonyl-ACP. Catalyzes the first condensation reaction which initiates fatty acid synthesis and may therefore play a role in governing the total rate of fatty acid production. Possesses both acetoacetyl-ACP synthase and acetyl transacylase activities. Its substrate specificity determines the biosynthesis of branched-chain and/or straight-chain of fatty acids. In Lactobacillus delbrueckii subsp. bulgaricus (strain ATCC 11842 / DSM 20081 / BCRC 10696 / JCM 1002 / NBRC 13953 / NCIMB 11778 / NCTC 12712 / WDCM 00102 / Lb 14), this protein is Beta-ketoacyl-[acyl-carrier-protein] synthase III.